The primary structure comprises 379 residues: Protein COS4 (379 aa).

4 helical membrane-spanning segments follow: residues 43–63, 70–90, 233–253, and 255–275; these read IYKS…SVWW, IYPL…VLVI, ISNI…YVSR, and MCLL…VQGF.

Belongs to the DUP/COS family.

The protein localises to the membrane. The polypeptide is Protein COS4 (COS4) (Saccharomyces cerevisiae (strain ATCC 204508 / S288c) (Baker's yeast)).